The chain runs to 544 residues: WD repeat-containing protein 25 (544 aa).

Disordered stretches follow at residues 17–74 (DSDS…EDPG) and 183–208 (QRQALSTETGKGKDVEPQGPPAGRAP). A compositionally biased stretch (polar residues) spans 30–39 (FNATGQQKDT). WD repeat units follow at residues 244–286 (GHRG…HCLQ), 290–329 (LHTEAVRAARWAPCGRRILSGGFDFALHLTDLETGTQLFS), 330–373 (GRSD…RSYK), 375–420 (TIQQ…KISN), 424–463 (HERFTCPSLALHPREPVFLAQTNGNYLALFSTVWPYRMSR), 469–510 (GHKV…RACT), and 513–544 (GHTQACVGTTYHPVLPSVLATCSWGGDMKIWH).

As to expression, expressed in heart, muscle, testis, ovary, uterus and prostate.

In Homo sapiens (Human), this protein is WD repeat-containing protein 25.